The primary structure comprises 206 residues: Ribosomal RNA large subunit methyltransferase E (206 aa).

S-adenosyl-L-methionine is bound by residues Gly60, Trp62, Asp80, Asp96, and Asp121. The active-site Proton acceptor is the Lys161.

It belongs to the class I-like SAM-binding methyltransferase superfamily. RNA methyltransferase RlmE family.

Its subcellular location is the cytoplasm. It catalyses the reaction uridine(2552) in 23S rRNA + S-adenosyl-L-methionine = 2'-O-methyluridine(2552) in 23S rRNA + S-adenosyl-L-homocysteine + H(+). Specifically methylates the uridine in position 2552 of 23S rRNA at the 2'-O position of the ribose in the fully assembled 50S ribosomal subunit. This chain is Ribosomal RNA large subunit methyltransferase E, found in Legionella pneumophila (strain Corby).